The primary structure comprises 29 residues: Cytochrome b6-f complex subunit 8 (29 aa).

The helical transmembrane segment at 3 to 23 (IVSLAWAALMIVFTFSLSLVV) threads the bilayer.

This sequence belongs to the PetN family. The 4 large subunits of the cytochrome b6-f complex are cytochrome b6, subunit IV (17 kDa polypeptide, PetD), cytochrome f and the Rieske protein, while the 4 small subunits are PetG, PetL, PetM and PetN. The complex functions as a dimer.

Its subcellular location is the plastid membrane. Functionally, component of the cytochrome b6-f complex, which mediates electron transfer between photosystem II (PSII) and photosystem I (PSI), cyclic electron flow around PSI, and state transitions. In Cuscuta exaltata (Tall dodder), this protein is Cytochrome b6-f complex subunit 8.